The sequence spans 339 residues: tRNA N6-adenosine threonylcarbamoyltransferase (339 aa).

The Fe cation site is built by H115 and H119. Residues 136–140, D168, E185, and S265 contribute to the substrate site; that span reads LISGG. Position 293 (D293) interacts with Fe cation.

Belongs to the KAE1 / TsaD family. Fe(2+) is required as a cofactor.

The protein resides in the cytoplasm. It catalyses the reaction L-threonylcarbamoyladenylate + adenosine(37) in tRNA = N(6)-L-threonylcarbamoyladenosine(37) in tRNA + AMP + H(+). In terms of biological role, required for the formation of a threonylcarbamoyl group on adenosine at position 37 (t(6)A37) in tRNAs that read codons beginning with adenine. Is probably involved in the transfer of the threonylcarbamoyl moiety of threonylcarbamoyl-AMP (TC-AMP) to the N6 group of A37. The chain is tRNA N6-adenosine threonylcarbamoyltransferase from Pyrobaculum calidifontis (strain DSM 21063 / JCM 11548 / VA1).